A 481-amino-acid polypeptide reads, in one-letter code: uncharacterized protein (481 aa).

The next 10 helical transmembrane spans lie at 30 to 50 (TIII…FVQF), 96 to 116 (AIAL…FIGM), 154 to 174 (CMAV…FNSV), 196 to 216 (ISLV…IAII), 220 to 240 (LVPM…GMHI), 250 to 270 (IVQS…ALVS), 311 to 331 (MLGV…IILL), 354 to 374 (IGEF…YSSI), 391 to 411 (KPWL…FGAV), and 424 to 444 (VMAV…PIVW).

This sequence belongs to the alanine or glycine:cation symporter (AGCS) (TC 2.A.25) family.

It localises to the cell inner membrane. This is an uncharacterized protein from Haemophilus influenzae (strain ATCC 51907 / DSM 11121 / KW20 / Rd).